Consider the following 470-residue polypeptide: 3-isopropylmalate dehydratase large subunit (470 aa).

[4Fe-4S] cluster contacts are provided by cysteine 347, cysteine 407, and cysteine 410.

Belongs to the aconitase/IPM isomerase family. LeuC type 1 subfamily. As to quaternary structure, heterodimer of LeuC and LeuD. [4Fe-4S] cluster serves as cofactor.

It catalyses the reaction (2R,3S)-3-isopropylmalate = (2S)-2-isopropylmalate. It participates in amino-acid biosynthesis; L-leucine biosynthesis; L-leucine from 3-methyl-2-oxobutanoate: step 2/4. Functionally, catalyzes the isomerization between 2-isopropylmalate and 3-isopropylmalate, via the formation of 2-isopropylmaleate. The polypeptide is 3-isopropylmalate dehydratase large subunit (Shewanella amazonensis (strain ATCC BAA-1098 / SB2B)).